A 189-amino-acid chain; its full sequence is Small ribosomal subunit protein uS5 (189 aa).

One can recognise an S5 DRBM domain in the interval 22–85 (FVDKLVAINR…EAAKRELIFV (64 aa)).

It belongs to the universal ribosomal protein uS5 family. Part of the 30S ribosomal subunit. Contacts proteins S4 and S8.

Its function is as follows. With S4 and S12 plays an important role in translational accuracy. Located at the back of the 30S subunit body where it stabilizes the conformation of the head with respect to the body. The protein is Small ribosomal subunit protein uS5 of Rhizobium johnstonii (strain DSM 114642 / LMG 32736 / 3841) (Rhizobium leguminosarum bv. viciae).